Reading from the N-terminus, the 37-residue chain is Dolichyl-diphosphooligosaccharide--protein glycosyltransferase subunit 4 (37 aa).

Residues 1 to 4 (MITD) lie on the Lumenal side of the membrane. A helical transmembrane segment spans residues 5 to 25 (VQLAIFANMLGVSLFLLVVLY). Topologically, residues 26–37 (HYVAVNNPKKQE) are cytoplasmic.

This sequence belongs to the OST4 family. Component of the oligosaccharyltransferase (OST) complex. OST exists in two different complex forms which contain common core subunits RPN1, RPN2, OST48, OST4, DAD1 and TMEM258, either STT3A or STT3B as catalytic subunits, and form-specific accessory subunits. STT3A complex assembly occurs through the formation of 3 subcomplexes. Subcomplex 1 contains RPN1 and TMEM258, subcomplex 2 contains the STT3A-specific subunits STT3A, DC2/OSTC, and KCP2 as well as the core subunit OST4, and subcomplex 3 contains RPN2, DAD1, and OST48. The STT3A complex can form stable complexes with the Sec61 complex or with both the Sec61 and TRAP complexes.

The protein resides in the endoplasmic reticulum. Its subcellular location is the endoplasmic reticulum membrane. It participates in protein modification; protein glycosylation. Subunit of the oligosaccharyl transferase (OST) complex that catalyzes the initial transfer of a defined glycan (Glc(3)Man(9)GlcNAc(2) in eukaryotes) from the lipid carrier dolichol-pyrophosphate to an asparagine residue within an Asn-X-Ser/Thr consensus motif in nascent polypeptide chains, the first step in protein N-glycosylation. N-glycosylation occurs cotranslationally and the complex associates with the Sec61 complex at the channel-forming translocon complex that mediates protein translocation across the endoplasmic reticulum (ER). All subunits are required for a maximal enzyme activity. Specifically involved in maintaining stability of STT3A-containing OST complexes. The polypeptide is Dolichyl-diphosphooligosaccharide--protein glycosyltransferase subunit 4 (Homo sapiens (Human)).